The primary structure comprises 155 residues: Large ribosomal subunit protein eL24 (155 aa).

Residues Ala-92 to Arg-155 are disordered. Residues Met-96–Lys-117 show a composition bias toward basic and acidic residues. The segment covering Lys-124–Lys-133 has biased composition (low complexity).

This sequence belongs to the eukaryotic ribosomal protein eL24 family.

This is Large ribosomal subunit protein eL24 (RpL24) from Plutella xylostella (Diamondback moth).